Consider the following 739-residue polypeptide: Polyribonucleotide nucleotidyltransferase (739 aa).

Mg(2+) is bound by residues aspartate 487 and aspartate 493. The region spanning 554 to 613 is the KH domain; the sequence is PRIETMQIPTDKIRDVIGTGGKVIREIVEKTGAKINIEDTGVVKIASADGKAIKAAYNWI. Residues 623 to 691 enclose the S1 motif domain; sequence GVIYDGTIVK…DRGKIRLSMK (69 aa). A disordered region spans residues 694 to 739; it reads DQQTGEDITDKIKAQRDAERAERGDEPREPREGGRHRGERRREAGE. Residues 701–739 show a composition bias toward basic and acidic residues; the sequence is ITDKIKAQRDAERAERGDEPREPREGGRHRGERRREAGE.

It belongs to the polyribonucleotide nucleotidyltransferase family. It depends on Mg(2+) as a cofactor.

The protein resides in the cytoplasm. The enzyme catalyses RNA(n+1) + phosphate = RNA(n) + a ribonucleoside 5'-diphosphate. In terms of biological role, involved in mRNA degradation. Catalyzes the phosphorolysis of single-stranded polyribonucleotides processively in the 3'- to 5'-direction. This is Polyribonucleotide nucleotidyltransferase from Methylobacterium radiotolerans (strain ATCC 27329 / DSM 1819 / JCM 2831 / NBRC 15690 / NCIMB 10815 / 0-1).